A 311-amino-acid chain; its full sequence is N-acetylmuramic acid 6-phosphate etherase (311 aa).

The region spanning 66 to 229 is the SIS domain; it reads VAVRMARGGR…STITMIRLGK (164 aa). Residue Glu-94 is the Proton donor of the active site. The active site involves Glu-125.

The protein belongs to the GCKR-like family. MurNAc-6-P etherase subfamily. In terms of assembly, homodimer.

The enzyme catalyses N-acetyl-D-muramate 6-phosphate + H2O = N-acetyl-D-glucosamine 6-phosphate + (R)-lactate. It participates in amino-sugar metabolism; N-acetylmuramate degradation. In terms of biological role, specifically catalyzes the cleavage of the D-lactyl ether substituent of MurNAc 6-phosphate, producing GlcNAc 6-phosphate and D-lactate. This is N-acetylmuramic acid 6-phosphate etherase from Streptomyces coelicolor (strain ATCC BAA-471 / A3(2) / M145).